The chain runs to 841 residues: Rho guanine nucleotide exchange factor 15 (841 aa).

Disordered stretches follow at residues 1–179, 239–261, and 279–333; these read MSAQ…QARA, RRASPLRTSRSRPHPPSIGHPAV, and KPPK…REEE. Residues 39–53 are compositionally biased toward polar residues; that stretch reads NGSSPQELPRNSNDA. Over residues 65-110 the composition is skewed to low complexity; the sequence is PPAASLKPPALLPPSASRASLDSQTSPDSPSSTPTPSPVSRRSASP. 2 positions are modified to phosphoserine: Ser-107 and Ser-109. Pro residues predominate over residues 111-124; sequence EPAPRSPVPPPKPS. Tyr-353 bears the Phosphotyrosine; by EPHB2 mark. Positions 417–601 constitute a DH domain; the sequence is RMQESLFEVV…SKIIERCSAE (185 aa). The interval 765–793 is disordered; the sequence is ESSAPAKTEGRSLESRAAPKHLHKTPEGW.

As to quaternary structure, interacts with EPHB2. Interacts with EPHA4. Phosphorylated on tyrosine residues upon EFNA1 stimulation. EPHB2-dependent phosphorylation at Tyr-353 triggers UBE3A-mediated ubiquitination. Post-translationally, ubiquitinated; UBE3A-mediated ubiquitination and degradation by the proteasome promotes EFNB1-dependent synapse formation. As to expression, expressed in the vascular smooth muscle of coronary artery.

It localises to the cell projection. It is found in the dendrite. In terms of biological role, specific GEF for RhoA activation. Does not activate RAC1 or CDC42. Regulates vascular smooth muscle contractility. Negatively regulates excitatory synapse development by suppressing the synapse-promoting activity of EPHB2. This is Rho guanine nucleotide exchange factor 15 (ARHGEF15) from Homo sapiens (Human).